A 334-amino-acid chain; its full sequence is Glyoxylate reductase (334 aa).

NADP(+) contacts are provided by residues 158–161 (FGRI), 180–182 (SRT), and 239–241 (IAR). Residues Arg-241 and Glu-270 contribute to the active site. Residue His-288 is the Proton donor of the active site. 288 to 290 (HIG) lines the NADP(+) pocket.

This sequence belongs to the D-isomer specific 2-hydroxyacid dehydrogenase family. GyaR subfamily. In terms of assembly, homodimer.

It is found in the cytoplasm. The enzyme catalyses glycolate + NAD(+) = glyoxylate + NADH + H(+). The chain is Glyoxylate reductase from Thermococcus onnurineus (strain NA1).